The primary structure comprises 280 residues: Protein MGF 505-3R (280 aa).

The protein belongs to the asfivirus MGF 505 family.

Functionally, plays a role in virus cell tropism, and may be required for efficient virus replication in macrophages. This is Protein MGF 505-3R from African swine fever virus (strain Badajoz 1971 Vero-adapted) (Ba71V).